Consider the following 191-residue polypeptide: Dephospho-CoA kinase (191 aa).

A DPCK domain is found at 3–191 (AIGITGSYAS…KLILVIARKL (189 aa)). 11 to 16 (ASGKTF) lines the ATP pocket.

It belongs to the CoaE family.

It localises to the cytoplasm. The enzyme catalyses 3'-dephospho-CoA + ATP = ADP + CoA + H(+). Its pathway is cofactor biosynthesis; coenzyme A biosynthesis; CoA from (R)-pantothenate: step 5/5. Its function is as follows. Catalyzes the phosphorylation of the 3'-hydroxyl group of dephosphocoenzyme A to form coenzyme A. This is Dephospho-CoA kinase from Rickettsia felis (strain ATCC VR-1525 / URRWXCal2) (Rickettsia azadi).